The chain runs to 180 residues: Ribulose bisphosphate carboxylase small subunit, chloroplastic (180 aa).

A chloroplast-targeting transit peptide spans 1-57; it reads MVSSMMVSSAATFTRASPAQSSMVAPFTGLKSASAFPVTRKPNADLSHLPSNGGRVQ.

The protein belongs to the RuBisCO small chain family. In terms of assembly, heterohexadecamer of 8 large and 8 small subunits.

Its subcellular location is the plastid. It localises to the chloroplast. Its function is as follows. RuBisCO catalyzes two reactions: the carboxylation of D-ribulose 1,5-bisphosphate, the primary event in carbon dioxide fixation, as well as the oxidative fragmentation of the pentose substrate. Both reactions occur simultaneously and in competition at the same active site. Although the small subunit is not catalytic it is essential for maximal activity. This Musa acuminata (Banana) protein is Ribulose bisphosphate carboxylase small subunit, chloroplastic.